A 232-amino-acid chain; its full sequence is 6-phosphogluconolactonase (232 aa).

It belongs to the glucosamine/galactosamine-6-phosphate isomerase family. 6-phosphogluconolactonase subfamily.

It catalyses the reaction 6-phospho-D-glucono-1,5-lactone + H2O = 6-phospho-D-gluconate + H(+). The protein operates within carbohydrate degradation; pentose phosphate pathway; D-ribulose 5-phosphate from D-glucose 6-phosphate (oxidative stage): step 2/3. Its function is as follows. Hydrolysis of 6-phosphogluconolactone to 6-phosphogluconate. The sequence is that of 6-phosphogluconolactonase (pgl) from Aggregatibacter actinomycetemcomitans (Actinobacillus actinomycetemcomitans).